A 1160-amino-acid chain; its full sequence is GPI inositol-deacylase (1160 aa).

The disordered stretch occupies residues 1-92 (MHRRSSGSPV…DPRSSSAAMP (92 aa)). Positions 57–92 (GASTPRSRNSSTWRMPSSATTTLLPPDPRSSSAAMP) are enriched in polar residues. A glycan (N-linked (GlcNAc...) asparagine) is linked at Asn-65. A helical transmembrane segment spans residues 120–140 (PCSILTALTSLLASLFLCAIL). Ser-307 is an active-site residue. 2 helical membrane-spanning segments follow: residues 786–806 (LVMR…ALVL) and 832–852 (SSLP…ATSS). The N-linked (GlcNAc...) asparagine glycan is linked to Asn-866. A run of 2 helical transmembrane segments spans residues 886–906 (AFFW…CVIL) and 973–993 (ILLL…VACI). An N-linked (GlcNAc...) asparagine glycan is attached at Asn-1019. The next 4 membrane-spanning stretches (helical) occupy residues 1023 to 1043 (SIFI…LVWA), 1060 to 1080 (VLSI…TMIP), 1092 to 1112 (LILF…AYLL), and 1115 to 1135 (LANI…GFSV).

Belongs to the GPI inositol-deacylase family.

It localises to the endoplasmic reticulum membrane. Functionally, involved in inositol deacylation of GPI-anchored proteins which plays important roles in the quality control and ER-associated degradation of GPI-anchored proteins. This Aspergillus terreus (strain NIH 2624 / FGSC A1156) protein is GPI inositol-deacylase (bst1).